Reading from the N-terminus, the 339-residue chain is Bifunctional phosphoglucose/phosphomannose isomerase (339 aa).

The SIS domain occupies 22 to 164 (ISVNVKAEDI…IEPVDDQIEE (143 aa)). Residues Gly-41, Ser-42, Ser-83, Ser-85, Thr-88, and Arg-135 each contribute to the D-fructose 6-phosphate site. Catalysis depends on Glu-221, which acts as the Proton acceptor. D-fructose 6-phosphate-binding residues include His-237 and Lys-331. His-237 acts as the Proton donor in catalysis. Lys-331 functions as the Proton acceptor in the catalytic mechanism.

Belongs to the PGI/PMI family. As to quaternary structure, homodimer.

The catalysed reaction is alpha-D-glucose 6-phosphate = beta-D-fructose 6-phosphate. The enzyme catalyses D-mannose 6-phosphate = D-fructose 6-phosphate. Functionally, dual specificity isomerase that catalyzes the isomerization of both glucose-6-phosphate and mannose-6-phosphate to fructose-6-phosphate. In Caldicellulosiruptor bescii (strain ATCC BAA-1888 / DSM 6725 / KCTC 15123 / Z-1320) (Anaerocellum thermophilum), this protein is Bifunctional phosphoglucose/phosphomannose isomerase.